We begin with the raw amino-acid sequence, 219 residues long: MKAIVPFKVVNVKSRLASLLTPEERSELAKLMLRDITSTLAAAGVEVELLTTQPFEWDGATVIVSEKELNPALNDYLLANDSPVMIVMADIPLITEKNVRDMLASPADIVICPGRGGGTNVQLIRRPDKYHVDYYGASFMDHMRIAQENGLTTEVFDSFNVSSDIDEAGDLIELYIHGKGDAAKYLRSITVLDDSKGRVRVVKEESNLRAVRIPGKMTG.

Belongs to the CofC family. As to quaternary structure, homodimer.

It carries out the reaction (2S)-2-phospholactate + GTP + H(+) = (2S)-lactyl-2-diphospho-5'-guanosine + diphosphate. It participates in cofactor biosynthesis; coenzyme F420 biosynthesis. Functionally, guanylyltransferase that catalyzes the activation of (2S)-2-phospholactate (2-PL) as (2S)-lactyl-2-diphospho-5'-guanosine, via the condensation of 2-PL with GTP. It is involved in the biosynthesis of coenzyme F420, a hydride carrier cofactor. In Methanocella arvoryzae (strain DSM 22066 / NBRC 105507 / MRE50), this protein is 2-phospho-L-lactate guanylyltransferase.